The sequence spans 836 residues: Zinc fingers and homeoboxes protein 2 (836 aa).

The tract at residues 1-61 (MASKRKSTTP…EHSSKETEVV (61 aa)) is disordered. Positions 8–19 (TTPCMVRTSQVL) are enriched in polar residues. The tract at residues 27–77 (ADRAKDKGAGMPQSDVTKDSWAAEPEHSSKETEVVEVKSMGENLSKKLQGG) is interaction with EFNB1. Basic and acidic residues predominate over residues 50–61 (EPEHSSKETEVV). Residue lysine 64 forms a Glycyl lysine isopeptide (Lys-Gly) (interchain with G-Cter in SUMO2) linkage. 2 consecutive C2H2-type zinc fingers follow at residues 78–101 (YECK…DMQH) and 110–133 (YVCA…SKFH). A disordered region spans residues 164-214 (PITASGPGSSDNDPGVSVGKTPMTKTGKLKADAKKVPKKPDEAAPENHMEG). Basic and acidic residues predominate over residues 192 to 214 (LKADAKKVPKKPDEAAPENHMEG). A required for homodimerization region spans residues 195–358 (DAKKVPKKPD…PAQLTPTKVS (164 aa)). 4 consecutive DNA-binding regions (homeobox) follow at residues 263-324 (NTTK…WSPE), 439-501 (TPAS…IVHI), 530-591 (PQKF…EQAV), and 628-690 (SPSS…TLSW). A required for repressor activity region spans residues 263–446 (NTTKYNSALD…PLTPASDRKK (184 aa)). The segment at 263–497 (NTTKYNSALD…SDHRYRCQRG (235 aa)) is required for interaction with NFYA. The tract at residues 317 to 446 (HGISWSPEEV…PLTPASDRKK (130 aa)) is required for nuclear localization. Positions 404 to 442 (GQKRPLVTPQAAPEPKRPHIAQVPEPPPKVANTPLTPAS) are disordered. A Glycyl lysine isopeptide (Lys-Gly) (interchain with G-Cter in SUMO2) cross-link involves residue lysine 455. Composition is skewed to basic and acidic residues over residues 699-709 (MSDDRGRDAVS), 730-746 (YAKD…EKLV), and 813-824 (RVAEGTVERADS). A disordered region spans residues 699-836 (MSDDRGRDAV…DSTPAEAGQA (138 aa)). 2 positions are modified to phosphoserine: serine 824 and serine 826.

It belongs to the ZHX family. In terms of assembly, homodimer (via homeobox domain 1). Heterodimer with ZHX1 (via homeobox domain 1). Heterodimer with ZHX3 (via homeobox domain 1). Heterodimerization with ZHX1 is not necessary for repressor activity. Interacts (via homeobox domain) with NFYA (via N-terminus). Interacts with EFNB1 intracellular domain peptide; the interaction enhances ZHX2 transcriptional repression activity. In terms of tissue distribution, expressed in retina where it localizes to Muller glial cells of the inner nuclear layer (at protein level). Detected in heart, brain, spleen, lung, liver, skeletal muscle, kidney and testis.

It is found in the nucleus. Acts as a transcriptional repressor. Represses the promoter activity of the CDC25C gene stimulated by NFYA. May play a role in retinal development where it regulates the composition of bipolar cell populations, by promoting differentiation of bipolar OFF-type cells. In the brain, may promote maintenance and suppress differentiation of neural progenitor cells in the developing cortex. The polypeptide is Zinc fingers and homeoboxes protein 2 (Zhx2) (Mus musculus (Mouse)).